The chain runs to 143 residues: UPF0201 protein Msed_1787 (143 aa).

The protein belongs to the UPF0201 family.

This is UPF0201 protein Msed_1787 from Metallosphaera sedula (strain ATCC 51363 / DSM 5348 / JCM 9185 / NBRC 15509 / TH2).